The sequence spans 882 residues: Homeobox-leucine zipper protein ROC3 (882 aa).

Residues 104-144 (DVDDDHKPQHSGHDQPPDAAQPSGAAGGNAKKKRYHRHTAH) are disordered. Positions 107–119 (DDHKPQHSGHDQP) are enriched in basic and acidic residues. The segment covering 133-143 (AKKKRYHRHTA) has biased composition (basic residues). The homeobox DNA-binding region spans 134-193 (KKKRYHRHTAHQIQQMEALFKECPHPDDKQRLKLSQELGLKPRQVKFWFQNRRTQMKAQQ). Positions 200 to 263 (ILRAENENLK…LDRLACIATR (64 aa)) form a coiled coil. The region spanning 340–584 (QEQDKQLVVD…LQRQCERLAS (245 aa)) is the START domain. The span at 782–816 (AAAPTISSSTTTTTGNGNGETSSTPPRNSSSNNNN) shows a compositional bias: low complexity. A disordered region spans residues 782–820 (AAAPTISSSTTTTTGNGNGETSSTPPRNSSSNNNNADEL).

It belongs to the HD-ZIP homeobox family. Class IV subfamily.

It is found in the nucleus. In terms of biological role, probable transcription factor. The sequence is that of Homeobox-leucine zipper protein ROC3 (ROC3) from Oryza sativa subsp. indica (Rice).